Here is an 82-residue protein sequence, read N- to C-terminus: Consomatin Ar1 (82 aa).

The signal sequence occupies residues 1–22; sequence MQTAYWVVVMMMMVWVTAPVSE. A propeptide spanning residues 23 to 60 is cleaved from the precursor; sequence GGKLSDVIWGLVPDDLTPQIILQILNASRHAYRRVRPR. A disulfide bond links cysteine 64 and cysteine 69. Tryptophan 66 carries the post-translational modification D-tryptophan. Residues proline 70, proline 71, and proline 73 each carry the 4-hydroxyproline modification. The propeptide occupies 74 to 82; the sequence is QWIHPLVKR.

Belongs to the conotoxin C superfamily. Consomatin family. Expressed by the venom duct.

It localises to the secreted. Functionally, moderately activates human somatostatin receptors (SSTR) with a preferential activation of SSTR1 and SSTR4. In vivo, does not cause behavioral changes in mice within a few minutes of intracranial injection, but causes a progressive loss of movement thereafter. Four to five hours after injection, mice recover, even with the highest dose tested. Shows antinociception and antihyperalgesia activities in two mouse models of acute pain, most probably by acting outside the central nervous system. This Conus arenatus (Sand-dusted cone) protein is Consomatin Ar1.